The chain runs to 825 residues: MTNPVIGTPWQKLDRPVSEEAIEGMDKYWRVANYMSIGQIYLRSNPLMKEPFTRDDVKHRLVGHWGTTPGLNFLLAHINRLIADHQQNTVFIMGPGHGGPAGTAQSYIDGTYTEYYPNITKDEAGLQKFFRQFSYPGGIPSHFAPETPGSIHEGGELGYALSHAYGAIMDNPSLFVPCIIGDGEAETGPLATGWQSNKLVNPRTDGIVLPILHLNGYKIANPTILARISDEELHDFFRGMGYHPYEFVAGFDNEDHLSIHRRFAELFETIFDEICDIKAAAQTDDMTRPFYPMLIFRTPKGWTCPKFIDGKKTEGSWRAHQVPLASARDTEAHFEVLKGWMESYKPEELFNADGSIKEDVTAFMPKGELRIGANPNANGGRIREDLKLPELDQYEITGVKEYGHGWGQVEAPRSLGAYCRDIIKNNPDSFRVFGPDETASNRLNATYEVTKKQWDNGYLSALVDENMAVTGQVVEQLSEHQCEGFLEAYLLTGRHGIWSSYESFVHVIDSMLNQHAKWLEATVREIPWRKPISSVNLLVSSHVWRQDHNGFSHQDPGVTSVLLNKTFNNDHVTNIYFATDANMLLAIAEKCFKSTNKINAIFAGKQPAATWITLDEARAELEAGAAEWKWASNAKSNDEVQVVLAAAGDVPTQEIMAASDALNKMGIKFKVVNVVDLIKLQSSKENDEAMSDEDFADLFTADKPVLFAYHSYAQDVRGLIYDRPNHDNFTVVGYKEQGSTTTPFDMVRVNDMDRYALQAKALELIDADKYADKINELNEFRKTAFQFAVDNGYDIPEFTDWVYPDVKVDETSMLSATAATAGDNE.

Belongs to the XFP family. Thiamine diphosphate serves as cofactor.

In Bifidobacterium animalis subsp. lactis (strain AD011), this protein is Probable phosphoketolase.